The following is a 456-amino-acid chain: CBL-interacting protein kinase 16 (456 aa).

One can recognise a Protein kinase domain in the interval 22–277 (YELGRLLGQG…IPEIMRTPWF (256 aa)). ATP is bound by residues 28-36 (LGQGTFAKV) and Lys51. Asp145 serves as the catalytic Proton acceptor. The activation loop stretch occupies residues 163–192 (DFGLAALPEQLRQDGLLHTQCGTPAYVAPE). An NAF domain is found at 309-335 (AMSPRTCNAFQLISSMSSGFDLSGMFE). Residues 339–368 (KAATVFTSRAPAATVIQKLEAVGRSLGYSA) are PPI.

It belongs to the protein kinase superfamily. CAMK Ser/Thr protein kinase family. SNF1 subfamily. Requires Mn(2+) as cofactor.

The catalysed reaction is L-seryl-[protein] + ATP = O-phospho-L-seryl-[protein] + ADP + H(+). It catalyses the reaction L-threonyl-[protein] + ATP = O-phospho-L-threonyl-[protein] + ADP + H(+). Functionally, CIPK serine-threonine protein kinases interact with CBL proteins. Binding of a CBL protein to the regulatory NAF domain of CIPK protein lead to the activation of the kinase in a calcium-dependent manner. This chain is CBL-interacting protein kinase 16 (CIPK16), found in Oryza sativa subsp. japonica (Rice).